We begin with the raw amino-acid sequence, 167 residues long: Urease accessory protein UreE (167 aa).

It belongs to the UreE family.

The protein resides in the cytoplasm. Its function is as follows. Involved in urease metallocenter assembly. Binds nickel. Probably functions as a nickel donor during metallocenter assembly. The chain is Urease accessory protein UreE from Pseudomonas paraeruginosa (strain DSM 24068 / PA7) (Pseudomonas aeruginosa (strain PA7)).